The following is a 354-amino-acid chain: MAIDKRKNDHIYLASSEISQVGSPWFDEVILLHNALPEIDLSEVDITTRFLGVKVNAPFGIGAMTGGTELAGKINAELAKIAEEFGIPIYVGSQRVALMKPEVRWTFEVVKKNAPSVPKVANLGAPQLAELSDEKLAEWVSQAVDMIDAYAIAIHLNAAQEVIQPEGEPRFRGVFEKIKVVRKAAGRPVIVKEVGNGISKEVASRLVEVADAIDVGGYGGTSFIAIEGARAAESGSSMRRRVAEVFKSWGIPTAASICEARSGYRGYIIASGGIRSGLDGAKALALGADFFTMSQPFLKAALEGRLREEIETVIAEVKIAMFLTGSRTIEDLKSAPRVYGPRLRNWIEQRKLVC.

6–7 (RK) contacts substrate. Residues 63–65 (AMT), Ser-93, and Asn-122 contribute to the FMN site. 93–95 (SQR) provides a ligand contact to substrate. Gln-160 is a substrate binding site. Residue Glu-161 coordinates Mg(2+). FMN is bound by residues Lys-192, Thr-221, 273 to 275 (GIR), and 294 to 295 (SQ).

The protein belongs to the IPP isomerase type 2 family. In terms of assembly, homooctamer. Dimer of tetramers. FMN serves as cofactor. Requires NADPH as cofactor. It depends on Mg(2+) as a cofactor.

Its subcellular location is the cytoplasm. It carries out the reaction isopentenyl diphosphate = dimethylallyl diphosphate. In terms of biological role, involved in the biosynthesis of isoprenoids. Catalyzes the 1,3-allylic rearrangement of the homoallylic substrate isopentenyl (IPP) to its allylic isomer, dimethylallyl diphosphate (DMAPP). The protein is Isopentenyl-diphosphate delta-isomerase of Pyrobaculum islandicum (strain DSM 4184 / JCM 9189 / GEO3).